The primary structure comprises 782 residues: HHIP-like protein 1 (782 aa).

A signal peptide spans 1-19 (MARARAGALLALWVLGAAA). Disulfide bonds link C181/C521, C185/C528, C399/C417, and C484/C584. N-linked (GlcNAc...) asparagine glycosylation occurs at N234. A disordered region spans residues 604 to 666 (EKFIPKTRST…RRGRLNSASR (63 aa)). The segment covering 610–623 (TRSTPRPTARAPTR) has biased composition (low complexity). Over residues 632 to 642 (AAPPAPTPRPA) the composition is skewed to pro residues. The region spanning 673-776 (VRLVRPAGLS…HDEDAGVVCS (104 aa)) is the SRCR domain. Cystine bridges form between C700-C765, C713-C775, and C745-C755.

The protein belongs to the HHIP family.

The protein localises to the secreted. The chain is HHIP-like protein 1 (HHIPL1) from Homo sapiens (Human).